The chain runs to 125 residues: Holo-[acyl-carrier-protein] synthase (125 aa).

Positions 8 and 57 each coordinate Mg(2+).

It belongs to the P-Pant transferase superfamily. AcpS family. The cofactor is Mg(2+).

The protein localises to the cytoplasm. The catalysed reaction is apo-[ACP] + CoA = holo-[ACP] + adenosine 3',5'-bisphosphate + H(+). Functionally, transfers the 4'-phosphopantetheine moiety from coenzyme A to a Ser of acyl-carrier-protein. The chain is Holo-[acyl-carrier-protein] synthase from Nitrosomonas eutropha (strain DSM 101675 / C91 / Nm57).